Consider the following 150-residue polypeptide: UPF0178 protein DMR_20710 (150 aa).

The protein belongs to the UPF0178 family.

The sequence is that of UPF0178 protein DMR_20710 from Solidesulfovibrio magneticus (strain ATCC 700980 / DSM 13731 / RS-1) (Desulfovibrio magneticus).